Consider the following 573-residue polypeptide: MRALLPYLALYKRHKWMLSLGIVLAIVTLLASIGLLTLSGWFLSASAVAGVAGLYSFNYMLPAAGVRGAAITRTAGRYFERLVSHDATFRVLQHLRIYTFSKLLPLSPAGLARYRQGELLNRVVADVDTLDHLYLRVISPLVGAFVVIMVVTIGLSFLDFTLAFTLGGIMLLTLFLMPPLFYRAGKSTGQNLTHLRGQYRQQLTAWLQGQAELTIFGASDRYRTQLENTEIQWLEAQRRQSELTALSQAIMLLIGALAVILMLWMASGGVGGNAQPGALIALFVFCALAAFEALAPVTGAFQHLGQVIASAVRISDLTDQKPEVTFPDTQTRVADRVSLTLRDVQFTYPEQSQQALKGISLQVNAGEHIAILGRTGCGKSTLLQQLTRAWDPQQGEILLNDSPIASLNEAALRQTISVVPQRVHLFSATLRDNLLLASPGSSDEALSEILRRVGLEKLLEDAGLNSWLGEGGRQLSGGELRRLAIARALLHDAPLVLLDEPTEGLDATTESQILELLAEMMREKTVLMVTHRLRGLSRFQQIIVMDNGQIIEQGTHAELLARQGRYYQFKQGL.

At 1–15 (MRALLPYLALYKRHK) the chain is on the cytoplasmic side. 2 helical membrane passes run 16–36 (WMLSLGIVLAIVTLLASIGLL) and 37–57 (TLSGWFLSASAVAGVAGLYSF). The 287-residue stretch at 20-306 (LGIVLAIVTL…VTGAFQHLGQ (287 aa)) folds into the ABC transmembrane type-1 domain. Topologically, residues 58–136 (NYMLPAAGVR…VDTLDHLYLR (79 aa)) are cytoplasmic. A helical transmembrane segment spans residues 137–157 (VISPLVGAFVVIMVVTIGLSF). Topologically, residues 158-161 (LDFT) are periplasmic. The helical transmembrane segment at 162–182 (LAFTLGGIMLLTLFLMPPLFY) threads the bilayer. Over 183–249 (RAGKSTGQNL…QSELTALSQA (67 aa)) the chain is Cytoplasmic. Residues 250–270 (IMLLIGALAVILMLWMASGGV) form a helical membrane-spanning segment. The Periplasmic portion of the chain corresponds to 271–276 (GGNAQP). A helical transmembrane segment spans residues 277-297 (GALIALFVFCALAAFEALAPV). The Cytoplasmic portion of the chain corresponds to 298–573 (TGAFQHLGQV…GRYYQFKQGL (276 aa)). One can recognise an ABC transporter domain in the interval 339-572 (LTLRDVQFTY…QGRYYQFKQG (234 aa)). 373–380 (GRTGCGKS) lines the ATP pocket.

It belongs to the ABC transporter superfamily. Cysteine exporter (TC 3.A.1.129.1) family. Forms a heterodimer with CydD.

The protein resides in the cell inner membrane. The catalysed reaction is L-cysteine(in) + ATP + H2O = L-cysteine(out) + ADP + phosphate + H(+). The enzyme catalyses glutathione(in) + ATP + H2O = glutathione(out) + ADP + phosphate + H(+). Its activity is regulated as follows. ATPase activity is stimulated by various thiol compounds. The presence of heme leads to a further enhancement of thiol-stimulated ATPase activity, although a large excess of heme inhibits activity. Glutathione transport is inhibited by sodium orthovanadate, an inhibitor of ABC-type transport systems, but not by the proton ionophore carbonyl cyanide m-chlorophenylhydrazone (CCCP). Functionally, part of the ABC transporter complex CydDC that exports the reduced low-molecular-weight thiols cysteine and glutathione to the periplasm. Export of these thiol-containing redox-active molecules may be crucial for redox homeostasis in the periplasm, permitting correct assembly of various respiratory complexes and formation of correct disulfide bonds in periplasmic and secreted proteins. CydC contains transmembrane domains (TMD), which form a pore in the inner membrane, and an ATP-binding domain (NBD), which is responsible for energy generation. Required for the assembly of functional cytochrome bd-type quinol oxidases and periplasmic c-type cytochromes. Overexpression of CydDC under anaerobic conditions also results in the formation of a heme biosynthesis-derived pigment, P-574. CydDC binds heme b, but heme is probably not transported by the complex and instead has a role in regulating ATPase activity. In terms of biological role, conversely, a more recent study suggests an alternative function of CydDC: authors suggest that CydDC does not mediate the export of L-cysteine but rather reduces cytoplasmic L-cystine to L-cysteine. The principle function of CydDC would be to maintain the reduced state of cytoplasmic L-cysteine, thereby providing an important connection between sulfur metabolism, oxidative stress and resistance to antibiotics. The chain is Glutathione/L-cysteine transport system ATP-binding/permease protein CydC from Escherichia coli (strain K12).